A 469-amino-acid chain; its full sequence is Zinc finger CCCH domain-containing protein 30 (469 aa).

The C3H1-type zinc-finger motif lies at 415–443 (VRPMKPCAYFNSPKGCRNGASCTFLHDAS). The segment at 444-469 (APTRKDHQKQKGSKRIKLDNTMGGRN) is disordered. A compositionally biased stretch (basic residues) spans 449-458 (DHQKQKGSKR).

The sequence is that of Zinc finger CCCH domain-containing protein 30 from Oryza sativa subsp. japonica (Rice).